The primary structure comprises 716 residues: Calpain-1 catalytic subunit (716 aa).

In terms of domain architecture, Calpain catalytic spans 55–354 (LFRDEAFPPV…FTRLEICNLT (300 aa)). Gln-109 and Asp-114 together coordinate Ca(2+). Catalysis depends on residues Cys-115, His-272, and Asn-296. Positions 318 and 323 each coordinate Ca(2+). The residue at position 354 (Thr-354) is a Phosphothreonine. The tract at residues 355–528 (PDALKSQRFR…KSAGTQELDD (174 aa)) is domain III. A linker region spans residues 529–544 (QVQANLPDEQVLSEEE). 4 consecutive EF-hand domains span residues 543-578 (EEID…IISK), 587-620 (FSLE…NRIR), 617-652 (NRIR…AGFK), and 682-716 (VRLE…TMFA). The segment at 545 to 715 (IDENFKSLFR…LFKWLQLTMF (171 aa)) is domain IV. Ca(2+)-binding residues include Asp-600, Asp-602, Asn-604, Lys-606, Glu-611, Asp-630, Asp-632, Ser-634, Ser-636, and Glu-641.

Belongs to the peptidase C2 family. In terms of assembly, forms a heterodimer with a small (regulatory) subunit CAPNS1. It depends on Ca(2+) as a cofactor. Undergoes calcium-induced successive autoproteolytic cleavages that generate a membrane-bound 78 kDa active form and an intracellular 75 kDa active form. Calpastatin reduces with high efficiency the transition from 78 kDa to 75 kDa calpain forms.

It is found in the cytoplasm. It localises to the cell membrane. It carries out the reaction Broad endopeptidase specificity.. Its activity is regulated as follows. Activated by micromolar concentrations of calcium and inhibited by calpastatin. Functionally, calcium-regulated non-lysosomal thiol-protease which catalyzes limited proteolysis of substrates involved in cytoskeletal remodeling and signal transduction. Proteolytically cleaves CTBP1. Cleaves and activates caspase-7 (CASP7). This is Calpain-1 catalytic subunit from Bos taurus (Bovine).